We begin with the raw amino-acid sequence, 603 residues long: Outer envelope protein 64, mitochondrial (603 aa).

Ser2 carries the post-translational modification N-acetylserine. The chain crosses the membrane as a helical span at residues 16-32 (KVWVVIGVTVAGIVILA). TPR repeat units follow at residues 488–521 (SEVM…NGAN), 523–555 (TYYC…DKKN), and 556–589 (VKAY…EPQN).

In terms of tissue distribution, expressed in roots and flower buds. Detected in leaves.

It is found in the mitochondrion outer membrane. Chaperone receptor mediating Hsp90-dependent protein targeting to mitochondria. This chain is Outer envelope protein 64, mitochondrial (OM64), found in Arabidopsis thaliana (Mouse-ear cress).